Reading from the N-terminus, the 595-residue chain is FERM domain-containing protein 3 (595 aa).

Positions 32–312 constitute an FERM domain; the sequence is MKCTIRLLDD…ENQAFYKYAK (281 aa). The helical transmembrane segment at 529 to 549 threads the bilayer; sequence LLVVGLGLLLFVFPLLLLLLE.

The protein resides in the membrane. Putative tumor suppressor gene that may be implicated in the origin and progression of lung cancer. The chain is FERM domain-containing protein 3 (Frmd3) from Mus musculus (Mouse).